Reading from the N-terminus, the 763-residue chain is MAAMLMQPWPPFLPHLTLVFLTLILFFPNQSFSQSDSPRNIETFFPNDTITPPVQSPVLSPPQNPSSSSSDSDRGNILRAVLITAASTLLVAAVFFFLVHKCRRRRNRVGGVDNTLQPPVPPLAEAALAREGFTRFGGNVKGLILDENGLDVLYWRKLQQSQRDNKGGSFRKEIIHGDDEEKNVIYSKSKKKSGPVTETPLLRGRSSTSHSVIHNDNYRNATTTHPPHVKTDSFEFVKPDPTPPPPPPPPIPVKQSATPPPPPPPKLKNNGPSPPPPPPLKKTAALSSSASKKPPPAPRGSSSGESSNGQVKLKPLHWDKVNPDSDHSMVWDKIDRGSFSFDGDLMEALFGYVAVGKKSPDDGGDKKPSSASPAQIFILDPRKSQNTAIVLKSLGMTRDELVESLMEGHDFHPDTLERLSRIAPTKEEQSAILQFDGDTKMLADAESFLFHLLKAVPCAFTRLNALLFRANYYPEISNHNKNLQTLDLACTELRSRGLFVKLLEAILKSGNRMNAGTARGDAQAFNLTALLKLSDVKSVDGKTTLLNFVVEEVVRSEGKRCVLNRRTNRSFSRSSSSSISEVISKEEQEKEYLRLGLPVVGGLSSEFTNVKKAAAVDYDTVAATCLALTSRAKDARRVLAQSEGDNKEGVRFVKKMNEFLDSVEEEVKLAKEEEKKVLELVKRTTEYYQAGAVKGKNPLHLFVIVRDFLAMVDKVCVEIARNLQRRSSMGSTQQRNAVKFPVLPPNFMSDRSRSDSGGSDSDM.

Residues 1–33 (MAAMLMQPWPPFLPHLTLVFLTLILFFPNQSFS) form the signal peptide. A disordered region spans residues 52-73 (PPVQSPVLSPPQNPSSSSSDSD). A helical transmembrane segment spans residues 80-100 (AVLITAASTLLVAAVFFFLVH). Disordered regions lie at residues 185 to 327 (IYSK…DSDH) and 726 to 763 (RSSM…DSDM). Over residues 205 to 225 (RSSTSHSVIHNDNYRNATTTH) the composition is skewed to polar residues. Residues 229–238 (VKTDSFEFVK) are compositionally biased toward basic and acidic residues. Pro residues predominate over residues 240 to 280 (DPTPPPPPPPPIPVKQSATPPPPPPPKLKNNGPSPPPPPPL). Residues 281–292 (KKTAALSSSASK) show a composition bias toward low complexity. An FH2 domain is found at 303–738 (SGESSNGQVK…MGSTQQRNAV (436 aa)). Residues 316 to 327 (LHWDKVNPDSDH) are compositionally biased toward basic and acidic residues. A compositionally biased stretch (polar residues) spans 726-736 (RSSMGSTQQRN).

The protein belongs to the formin-like family. Class-I subfamily. As to quaternary structure, interacts with profilin. In terms of tissue distribution, expressed in the whole plant (at protein level).

The protein resides in the cell membrane. In terms of biological role, might be involved in the organization and polarity of the actin cytoskeleton. The polypeptide is Formin-like protein 4 (FH4) (Arabidopsis thaliana (Mouse-ear cress)).